A 273-amino-acid chain; its full sequence is Short-chain dehydrogenase fogB (273 aa).

NADP(+) contacts are provided by Ile16, Asp66, Arg128, Tyr174, Lys178, Val207, and Thr209. The active-site Proton donor is the Tyr174. The Lowers pKa of active site Tyr role is filled by Lys178.

This sequence belongs to the short-chain dehydrogenases/reductases (SDR) family.

Its function is as follows. Short-chain dehydrogenase; part of the gene cluster that mediates the biosynthesis of flavoglaucin and congeners (including aspergin, dihydroauroglaucin and auroglaucin), prenylated salicylaldehyde derivatives carrying a saturated or an unsaturated C-7 side chain. The PKS fogA releases the carboxylic acid (8E,10E,12E)-3,5,7-trihydroxytetradeca-8,10,12-trienoic acid as its product, as well as derivatives with one and two double bonds. FogA is indeed able to reduce the initial triketide, thus being at least partially responsible for the differently saturated heptyl side chains of flavoglaucin congeners. The oxidoreductases fogB, fogC and fogD modify the nascent polyketide in fogA-bound form and, together, fogA, fogB, fogC and fogD are necessary for the formation of the aromatic core and the cyclized PKS products are released as salicyl alcohols. In particular, fogB is responsible for oxidation of a hydroxyl group or reduction of remaining double bond(s) at the C-7 residue whereas fogD is probably involved in the reductive release of the modified PKS products. The cytochrome P450 monooxygenase fogE is then responsible for the hydroxylation at C-3 of the benzene ring. The fogE products are substrates of the prenyltransferase fogH and the prenylated benzyl alcohols are subsequently oxidized by the fogF to produce the final aryl aldehydes flavoglaucin and congeners. The short-chain dehydrogenase fogG does not seem to be involved in the biosynthesis of the prenylated salicylaldehyde derivatives. The sequence is that of Short-chain dehydrogenase fogB from Aspergillus ruber (strain CBS 135680).